The sequence spans 161 residues: SsrA-binding protein (161 aa).

This sequence belongs to the SmpB family.

It localises to the cytoplasm. Its function is as follows. Required for rescue of stalled ribosomes mediated by trans-translation. Binds to transfer-messenger RNA (tmRNA), required for stable association of tmRNA with ribosomes. tmRNA and SmpB together mimic tRNA shape, replacing the anticodon stem-loop with SmpB. tmRNA is encoded by the ssrA gene; the 2 termini fold to resemble tRNA(Ala) and it encodes a 'tag peptide', a short internal open reading frame. During trans-translation Ala-aminoacylated tmRNA acts like a tRNA, entering the A-site of stalled ribosomes, displacing the stalled mRNA. The ribosome then switches to translate the ORF on the tmRNA; the nascent peptide is terminated with the 'tag peptide' encoded by the tmRNA and targeted for degradation. The ribosome is freed to recommence translation, which seems to be the essential function of trans-translation. This is SsrA-binding protein from Vibrio parahaemolyticus serotype O3:K6 (strain RIMD 2210633).